The sequence spans 5098 residues: Auxin transport protein BIG (5098 aa).

An N-acetylalanine modification is found at Ala2. 2 consecutive transmembrane segments (helical) span residues 1150–1170 and 1458–1478; these read AILL…NGLL and LAAE…IGTL. Positions 1539-1549 are enriched in acidic residues; sequence SVDEDEDDGTS. The tract at residues 1539–1562 is disordered; it reads SVDEDEDDGTSDGEVASLDKEDEE. The UBR-type zinc-finger motif lies at 1573-1644; sequence KVCTFTSSGS…RGSSCQCLKP (72 aa). The ZZ-type zinc finger occupies 2613-2672; it reads SVQYCCDGCSTVPILRRRWHCTVCPDFDLCEACYEVLDADRLPPPHTRDHPMTAIPIEVE. Cys2618, Cys2621, Cys2633, Cys2636, Cys2642, Cys2645, His2658, and His2662 together coordinate Zn(2+). The helical transmembrane segment at 2813 to 2833 threads the bilayer; the sequence is SSLGEIVILVFMFFTLMLRSW. The interval 3149-3174 is disordered; sequence EVVTGSNRSGSQSVDSKKKKKGEDGH. Residues 3151 to 3162 are compositionally biased toward polar residues; sequence VTGSNRSGSQSV. An MYND-type; degenerate zinc finger spans residues 3464–3504; sequence CPRCSRPVTDKHGICSNCHENAYQCRQCRNINYENLDSFLC. Coiled coils occupy residues 3537-3557 and 4313-4333; these read KKGL…YQQL and LEIL…NQEE. The interval 4569–5098 is UBR4 E3 catalytic module; it reads PSVPLILSML…QFVRSAIDKD (530 aa). Residues 4698-4817 form a HemiRING-type zinc finger; that stretch reads GLACMVCREG…WDNLNALGRA (120 aa). The Zn(2+) site is built by Cys4701, Cys4704, His4751, and Cys4754. Residues 4820 to 5098 enclose the UZI domain; the sequence is SRLRLLTYDI…QFVRSAIDKD (279 aa). Over residues 4891–4903 the composition is skewed to low complexity; sequence SSTSTATAPSSDS. The segment at 4891-4915 is disordered; that stretch reads SSTSTATAPSSDSRPLTPGSQLSST.

This sequence belongs to the UBR4 family. In terms of tissue distribution, constitutively expressed in roots, rosette leaves, inflorescence stems, and flowers. Present in inflorescence meristems, floral meristems and vascular tissues.

The protein resides in the membrane. Functionally, required for auxin efflux and polar auxin transport (PAT) influencing auxin-mediated developmental responses (e.g. cell elongation, apical dominance, lateral root production, inflorescence architecture, general growth and development). Controls the elongation of the pedicels and stem internodes through auxin action. Involved in the expression modulation of light-regulated genes. Represses CAB1 and CAB3 genes expression in etiolated seedlings. Confers sensitivity to the auxin transport inhibitors N-1-naphthylphthalamic acid (NPA), 2-carboxyphenyl-3-phenylpropane-l,2-dione (CPD), and methyl-2-chloro-9-hydroxyfluorene-9-carboxylate (CFM). Influences the polarized subcellular distribution of the auxin transporter PIN1 in response to auxin transport inhibitors. Plays a role in the regulation of responses to phytohormones such as auxin, cytokinins, ethylene and gibberellic acid (GA), particularly during light-mediated stimuli (e.g. shade ovoidance, etiolation). Required for pericycle cell activation to form lateral root primordia (LRP) in both high and low phosphate P conditions. Necessary for the plant-growth promotion and lateral root development mediated by the fungus Trichoderma virens. This chain is Auxin transport protein BIG (BIG), found in Arabidopsis thaliana (Mouse-ear cress).